Reading from the N-terminus, the 89-residue chain is Small ribosomal subunit protein bS20 (89 aa).

It belongs to the bacterial ribosomal protein bS20 family.

Binds directly to 16S ribosomal RNA. The chain is Small ribosomal subunit protein bS20 from Helicobacter pylori (strain P12).